A 234-amino-acid polypeptide reads, in one-letter code: Probable chemoreceptor glutamine deamidase CheD (234 aa).

The protein belongs to the CheD family.

It carries out the reaction L-glutaminyl-[protein] + H2O = L-glutamyl-[protein] + NH4(+). Its function is as follows. Probably deamidates glutamine residues to glutamate on methyl-accepting chemotaxis receptors (MCPs), playing an important role in chemotaxis. This Burkholderia pseudomallei (strain 1710b) protein is Probable chemoreceptor glutamine deamidase CheD.